A 146-amino-acid polypeptide reads, in one-letter code: Snaclec coagulation factor IX/factor X-binding protein subunit B (146 aa).

The N-terminal stretch at 1–23 (MGRFIFLSFGLLVVFLSLSGTGA) is a signal peptide. Cystine bridges form between cysteine 25–cysteine 36, cysteine 53–cysteine 142, and cysteine 119–cysteine 134. In terms of domain architecture, C-type lectin spans 32–143 (YEGHCYKPFN…CRMEAYFVCE (112 aa)). Ca(2+) contacts are provided by serine 64 and glutamate 70. Glutamate 143 is a Ca(2+) binding site.

Belongs to the snaclec family. Heterodimer with subunit A of IX/X-bp or IX-bp; disulfide-linked. Expressed by the venom gland.

It is found in the secreted. Its function is as follows. When linked to subunit A of IX/X-bp, anticoagulant protein which binds to the gamma-carboxyglutamic acid-domain regions of factors IX (F9) and factor X (F10) in the presence of calcium with a 1 to 1 stoichiometry. When linked to subunit A of IX-bp, anticoagulant protein which binds to the gamma-carboxyglutamic acid-domain regions of factor IX (but not to factor X) in the presence of calcium with a 1 to 1 stoichiometry. The protein is Snaclec coagulation factor IX/factor X-binding protein subunit B of Gloydius halys (Chinese water mocassin).